The following is a 1064-amino-acid chain: MSTITQFPSGNTQYRIEFDYLARTFVVVTLVNSSNPTLNRVLEVGRDYRFLNPTMIEMLVDQSGFDIVRIHRQTGTDLVVDFRNGSVLTASDLTTAELQAIHIAEEGRDQTVDLAKEYADAAGSSAGNAKDSEDEARRIAESIRAAGLIGYMTRRSFEKGYNVTTWSEVLLWEEDGDYYRWDGTLPKNVPAGSTPETSGGIGLGAWVSVGDAALRSQISNPEGAILYPELHRARWLDEKDARGWGAKGDGVTDDTAALTSALNDTPVGQKINGNGKTYKVTSLPDISRFINTRFVYERIPGQPLYYASEEFVQGELFKITDTPYYNAWPQDKAFVYENVIYAPYMGSDRHGVSRLHVSWVKSGDDGQTWSTPEWLTDLHPDYPTVNYHCMSMGVCRNRLFAMIETRTLAKNALTNCALWDRPMSRSLHLTGGITKAANQRYATIHVPDHGLFVGDFVNFSNSAVTGVSGDMTVATVIDKDNFTVLTPNQQTSDLNNAGKNWHMGTSFHKSPWRKTDLGLIPSVTEVHSFATIDNNGFAMGYHQGDVAPREVGLFYFPDAFNSPSNYVRRQIPSEYEPDASEPCIKYYDGVLYLITRGTRGDRLGSSLHRSRDIGQTWESLRFPHNVHHTTLPFAKVGDDLIMFGSERAENEWEAGAPDDRYKASYPRTFYARLNVNNWNADDIEWVNITDQIYQGGIVNSGVGVGSVVVKDNYIYYMFGGEDHFNPWTYGDNSAKDPFKSDGHPSDLYCYKMKIGPDNRVSRDFRYGAVPNRAVPVFFDTNGVRTVPAPMEFTGDLGLGHVTIRASTSSNIRSEVLMEGEYGFIGKSIPTDNPAGQRIIFCGGEGTSSTTGAQITLYGANNTDSRRIVYNGDEHLFQSADVKPYNDNVTALGGPSNRFTTAYLGSNPIVTSNGERKTEPVVFDDAFLDAWGDVHYIMYQWLDAVQLKGNDARIHFGVIAQQIRDVFIAHGLMDENSTNCRYAVLCYDKYPRMTDTVFSHNEIVEHTDEEGNVTTTEEPVYTEVVIHEEGEEWGVRPDGIFFAEAAYQRRKLERIEARLSALEQK.

2 BNR repeats span residues 360–371 and 496–503; these read VKSGDDGQTWST and NAGKNWHM. Catalysis depends on residues Glu-581 and Arg-596. The stretch at 608–619 is one BNR 3 repeat; it reads HRSRDIGQTWES. Residue Arg-647 is part of the active site. The region spanning 911-1064 is the Peptidase S74 domain; it reads SNGERKTEPV…EARLSALEQK (154 aa). A coiled-coil region spans residues 1044-1064; sequence AAYQRRKLERIEARLSALEQK.

This sequence belongs to the glycosyl hydrolase 58 family. In terms of assembly, homotrimer. Interacts with sialic acid. Proteolytic cleavage and release of the chaperone in the host cytosol stabilizes the folded protein. The cleavage gives rise to the mature tail spike protein but is not essential for catalytic activity. However, release of the chaperone domain confers kinetic stability and processivity to the endosialidase.

It is found in the virion. The catalysed reaction is Endohydrolysis of (2-&gt;8)-alpha-sialosyl linkages in oligo- or poly(sialic) acids.. In terms of biological role, receptor binding protein, which mediates the attachment to the host capsule. Degrades the alpha-2,8-linked polysialic acid of E.coli K1 capsule by cleaving within the polymer chain of polysialic acid. Functionally, the C-terminal chaperone protein mediates homotrimerization and proper folding of the catalytic endo-N trimer. The chain is Tail spike protein from Escherichia coli (Bacteriophage K1F).